We begin with the raw amino-acid sequence, 254 residues long: Major prion protein (254 aa).

An N-terminal signal peptide occupies residues 1–22 (MANLSYWLLALFVATWTDVGLC). Positions 23 to 231 (KKRPKPGGWN…SQAYYDGRRS (209 aa)) are interaction with GRB2, ERI3 and SYN1. The disordered stretch occupies residues 25–108 (RPKPGGWNTG…WNKPNKPKTS (84 aa)). Repeat copies occupy residues 51-59 (PQGGGTWGQ), 60-67 (PHGGGWGQ), 68-75 (PHGGGWGQ), 76-83 (PHGGGWGQ), and 84-91 (PHGGGWGQ). Residues 51-91 (PQGGGTWGQPHGGGWGQPHGGGWGQPHGGGWGQPHGGGWGQ) form a 5 X 8 AA tandem repeats of P-H-G-G-G-W-G-Q region. The segment covering 52-95 (QGGGTWGQPHGGGWGQPHGGGWGQPHGGGWGQPHGGGWGQGGGT) has biased composition (gly residues). 12 residues coordinate Cu(2+): His61, Gly62, Gly63, His69, Gly70, Gly71, His77, Gly78, Gly79, His85, Gly86, and Gly87. Residues 90–231 (GQGGGTHNQW…SQAYYDGRRS (142 aa)) form a prP27-30 (protease resistant core) region. A disulfide bridge links Cys179 with Cys214. N-linked (GlcNAc...) asparagine glycosylation is found at Asn181 and Asn197. The GPI-anchor amidated serine moiety is linked to residue Ser231. The propeptide at 232–254 (SAVLFSSPPVILLISFLIFLIVG) is removed in mature form.

It belongs to the prion family. Monomer and homodimer. Has a tendency to aggregate into amyloid fibrils containing a cross-beta spine, formed by a steric zipper of superposed beta-strands. Soluble oligomers may represent an intermediate stage on the path to fibril formation. Copper binding may promote oligomerization. Interacts with GRB2, APP, ERI3/PRNPIP and SYN1. Mislocalized cytosolically exposed PrP interacts with MGRN1; this interaction alters MGRN1 subcellular location and causes lysosomal enlargement. Interacts with KIAA1191.

The protein localises to the cell membrane. The protein resides in the golgi apparatus. Its function is as follows. Its primary physiological function is unclear. Has cytoprotective activity against internal or environmental stresses. May play a role in neuronal development and synaptic plasticity. May be required for neuronal myelin sheath maintenance. May play a role in iron uptake and iron homeostasis. Soluble oligomers are toxic to cultured neuroblastoma cells and induce apoptosis (in vitro). Association with GPC1 (via its heparan sulfate chains) targets PRNP to lipid rafts. Also provides Cu(2+) or Zn(2+) for the ascorbate-mediated GPC1 deaminase degradation of its heparan sulfate side chains. This is Major prion protein (PRNP) from Nothocricetulus migratorius (Gray dwarf hamster).